The sequence spans 248 residues: Trypsin I-P1 (248 aa).

The signal sequence occupies residues 1–15 (MKFLVLVAFVGVTVA). The propeptide at 16 to 25 (FPISDEDDDK) is activation peptide. A Peptidase S1 domain is found at 26–246 (IVGGYSCARS…YVSWIKTTMS (221 aa)). 6 disulfides stabilise this stretch: Cys32–Cys162, Cys50–Cys66, Cys134–Cys235, Cys141–Cys208, Cys173–Cys187, and Cys198–Cys222. Residue His65 is the Charge relay system of the active site. The Ca(2+) site is built by Glu77, Asn79, and Glu87. Asp109 (charge relay system) is an active-site residue. The active-site Charge relay system is Ser202.

Belongs to the peptidase S1 family. The cofactor is Ca(2+). High levels are seen in the pancreas while lower levels are found in the liver, spleen and thymus.

Its subcellular location is the secreted. The protein localises to the extracellular space. The enzyme catalyses Preferential cleavage: Arg-|-Xaa, Lys-|-Xaa.. This chain is Trypsin I-P1, found in Gallus gallus (Chicken).